The following is a 540-amino-acid chain: O-phosphoserine--tRNA(Cys) ligase (540 aa).

Residues 188–190, 233–235, 275–276, and Asn-319 contribute to the substrate site; these read HMT, SAS, and YY.

The protein belongs to the class-II aminoacyl-tRNA synthetase family. O-phosphoseryl-tRNA(Cys) synthetase subfamily. As to quaternary structure, homotetramer. Interacts with SepCysS.

The enzyme catalyses tRNA(Cys) + O-phospho-L-serine + ATP = O-phospho-L-seryl-tRNA(Cys) + AMP + diphosphate. Functionally, catalyzes the attachment of O-phosphoserine (Sep) to tRNA(Cys). This chain is O-phosphoserine--tRNA(Cys) ligase, found in Methanococcus aeolicus (strain ATCC BAA-1280 / DSM 17508 / OCM 812 / Nankai-3).